The sequence spans 133 residues: ATP synthase epsilon chain (133 aa).

The protein belongs to the ATPase epsilon chain family. As to quaternary structure, F-type ATPases have 2 components, CF(1) - the catalytic core - and CF(0) - the membrane proton channel. CF(1) has five subunits: alpha(3), beta(3), gamma(1), delta(1), epsilon(1). CF(0) has three main subunits: a, b and c.

The protein localises to the cell inner membrane. Its function is as follows. Produces ATP from ADP in the presence of a proton gradient across the membrane. This Desulfosudis oleivorans (strain DSM 6200 / JCM 39069 / Hxd3) (Desulfococcus oleovorans) protein is ATP synthase epsilon chain.